A 64-amino-acid chain; its full sequence is U2-aranetoxin-Av1a (64 aa).

Expressed in fat body, but not in cephalothorax, silk gland, midgut.

Functionally, insecticidal toxin. The sequence is that of U2-aranetoxin-Av1a from Araneus ventricosus (Orbweaver spider).